Here is a 207-residue protein sequence, read N- to C-terminus: Large ribosomal subunit protein bL25 (207 aa).

This sequence belongs to the bacterial ribosomal protein bL25 family. CTC subfamily. As to quaternary structure, part of the 50S ribosomal subunit; part of the 5S rRNA/L5/L18/L25 subcomplex. Contacts the 5S rRNA. Binds to the 5S rRNA independently of L5 and L18.

This is one of the proteins that binds to the 5S RNA in the ribosome where it forms part of the central protuberance. This chain is Large ribosomal subunit protein bL25, found in Orientia tsutsugamushi (strain Boryong) (Rickettsia tsutsugamushi).